Here is a 369-residue protein sequence, read N- to C-terminus: DNA replication and repair protein RecF (369 aa).

An ATP-binding site is contributed by 30–37 (GRNAQGKT).

This sequence belongs to the RecF family.

Its subcellular location is the cytoplasm. Its function is as follows. The RecF protein is involved in DNA metabolism; it is required for DNA replication and normal SOS inducibility. RecF binds preferentially to single-stranded, linear DNA. It also seems to bind ATP. The polypeptide is DNA replication and repair protein RecF (Streptococcus agalactiae serotype III (strain NEM316)).